A 314-amino-acid polypeptide reads, in one-letter code: Triosephosphate isomerase, chloroplastic (314 aa).

Residues 1–22 are compositionally biased toward polar residues; sequence MAVASTSLASQLSGPKSLSQPY. The disordered stretch occupies residues 1-25; it reads MAVASTSLASQLSGPKSLSQPYSGL. The N-terminal 59 residues, 1-59, are a transit peptide targeting the chloroplast; that stretch reads MAVASTSLASQLSGPKSLSQPYSGLRRSCPKLDQSHSSLFQHLSLSSSSRKASRAVVAM. Residues Asn-70 and Lys-72 each contribute to the substrate site. The active-site Electrophile is the His-154. The active-site Proton acceptor is Glu-224.

Belongs to the triosephosphate isomerase family. As to quaternary structure, homodimer.

It localises to the plastid. The protein resides in the chloroplast. It carries out the reaction D-glyceraldehyde 3-phosphate = dihydroxyacetone phosphate. It participates in carbohydrate biosynthesis; Calvin cycle. This is Triosephosphate isomerase, chloroplastic (TPI) from Fragaria ananassa (Strawberry).